The chain runs to 461 residues: MSSCALVQRPPPWRAAVAPGDGMVAVDGTQFVVDCGRTIFFSGFNAYWLMMMAADPALRGAVATAFQQASAHGLNLARTWAFSDGGDQPLQSSPGVYNETMFQGLDFVIAEARRHGIYLLLCLTNNFDNFGGKRQYVRWAGDAGHNLTSDDDFFTSTIVKSYFKNHVKTVLTRVNTLTGVAYKDDPTIFAWELMNEPRCYADPTGAMVQAWVEEMAPYVKSVDGRHLVTPGLEGFYGAGEHESKELNPWGIYYGTNYVATHRTAAVDFATIHLYPDVWLWGSSADEQATFFRNWTRSHIDATAAYLGMPLLVTEYGKFLWKEVGANKAQRNYFLDLVLDAIYASASRGGPLVGGAFWQLLLDGDIVAGMDSLRDGYEIILAEDSRAASIIGEHSEQLAALNGQDADVLCRRASSHRRTRLGNSLSCGGGDTLELLLRMVLACFVSLSRSISSFIVQNFILL.

Substrate is bound by residues W80 and N195. Catalysis depends on E196, which acts as the Proton donor. Y274 contributes to the substrate binding site. E314 serves as the catalytic Nucleophile. 2 residues coordinate substrate: W357 and D364.

This sequence belongs to the glycosyl hydrolase 5 (cellulase A) family. In terms of tissue distribution, ubiquitous.

It carries out the reaction Random hydrolysis of (1-&gt;4)-beta-D-mannosidic linkages in mannans, galactomannans and glucomannans.. The protein is Mannan endo-1,4-beta-mannosidase 4 (MAN4) of Oryza sativa subsp. japonica (Rice).